The chain runs to 326 residues: Light-induced protein, chloroplastic (326 aa).

A chloroplast-targeting transit peptide spans 1–63; the sequence is MASISSLNQI…TNPKPKFTAQ (63 aa).

This sequence belongs to the LIPC family. In terms of assembly, associates with the major light-harvesting antenna complex polypeptides of the PSII oxygen-evolving complex. In terms of tissue distribution, expressed at high levels in leaves and in the petals and anthers of flowers.

The protein localises to the plastid. It localises to the chloroplast thylakoid membrane. Functionally, required for normal plant growth. May be both photoprotective and play an ancillary role in photosynthesis. May structurally stabilize thylakoids during osmotic and oxidative stress. In Solanum demissum (Wild potato), this protein is Light-induced protein, chloroplastic.